We begin with the raw amino-acid sequence, 374 residues long: Amino acid binding protein (374 aa).

An N-terminal signal peptide occupies residues 1-27 (MSKKLFRKGILALAVSSVMGLSTHALA).

This sequence belongs to the leucine-binding protein family.

It localises to the periplasm. Binds primarily proteinogenic amino acids. This is Amino acid binding protein from Pseudomonas aeruginosa (strain ATCC 15692 / DSM 22644 / CIP 104116 / JCM 14847 / LMG 12228 / 1C / PRS 101 / PAO1).